The following is a 156-amino-acid chain: Small ribosomal subunit protein uS7 (156 aa).

It belongs to the universal ribosomal protein uS7 family. Part of the 30S ribosomal subunit. Contacts proteins S9 and S11.

One of the primary rRNA binding proteins, it binds directly to 16S rRNA where it nucleates assembly of the head domain of the 30S subunit. Is located at the subunit interface close to the decoding center, probably blocks exit of the E-site tRNA. In Ralstonia nicotianae (strain ATCC BAA-1114 / GMI1000) (Ralstonia solanacearum), this protein is Small ribosomal subunit protein uS7.